A 437-amino-acid chain; its full sequence is ATP-dependent protease ATPase subunit HslU (437 aa).

Residues Val-18, 60–65 (GCGKTE), Asp-250, Glu-315, and Arg-387 contribute to the ATP site.

The protein belongs to the ClpX chaperone family. HslU subfamily. A double ring-shaped homohexamer of HslV is capped on each side by a ring-shaped HslU homohexamer. The assembly of the HslU/HslV complex is dependent on binding of ATP.

It is found in the cytoplasm. Functionally, ATPase subunit of a proteasome-like degradation complex; this subunit has chaperone activity. The binding of ATP and its subsequent hydrolysis by HslU are essential for unfolding of protein substrates subsequently hydrolyzed by HslV. HslU recognizes the N-terminal part of its protein substrates and unfolds these before they are guided to HslV for hydrolysis. In Methylorubrum extorquens (strain PA1) (Methylobacterium extorquens), this protein is ATP-dependent protease ATPase subunit HslU.